The primary structure comprises 206 residues: Regulator of rDNA transcription 14 (206 aa).

The disordered stretch occupies residues 178-206 (FVKDHRYPGLTPGLAPVGLSDEEDSSEED). Phosphoserine occurs at positions 197, 202, and 203. Over residues 197–206 (SDEEDSSEED) the composition is skewed to acidic residues.

The protein belongs to the RRT14 family.

The protein resides in the nucleus. It localises to the nucleolus. In terms of biological role, involved in ribosome biogenesis, probably through modulation of rDNA transcription. This chain is Regulator of rDNA transcription 14 (RRT14), found in Saccharomyces cerevisiae (strain JAY291) (Baker's yeast).